The primary structure comprises 73 residues: UPF0235 protein LBL_1291 (73 aa).

The protein belongs to the UPF0235 family.

This chain is UPF0235 protein LBL_1291, found in Leptospira borgpetersenii serovar Hardjo-bovis (strain L550).